We begin with the raw amino-acid sequence, 189 residues long: MRRNIRVTLGAATIVAALGLSGCSHPEFKRSSPPAPSLPPVTSSPLEAAPITPLPAPEALIDVLSRLADPAVPGTNKVQLIEGATPENAAALDRFTTALRDGSYLPMTFAANDIAWSDNKPSDVMATVVVTTAHPDNREFTFPMEFVSFKGGWQLSRQTAEMLLAMGNSPDSTPSATSPAPAPSPTPPG.

The N-terminal stretch at 1-22 is a signal peptide; it reads MRRNIRVTLGAATIVAALGLSG. Residue Cys-23 is the site of N-palmitoyl cysteine attachment. The S-diacylglycerol cysteine moiety is linked to residue Cys-23. 2 disordered regions span residues 26–49 and 166–189; these read PEFKRSSPPAPSLPPVTSSPLEAA and MGNSPDSTPSATSPAPAPSPTPPG. A compositionally biased stretch (low complexity) spans 169–179; sequence SPDSTPSATSP. The segment covering 180–189 has biased composition (pro residues); that stretch reads APAPSPTPPG.

This sequence belongs to the MTB12 family.

Its subcellular location is the cell membrane. The chain is Putative lipoprotein LppK (lppK) from Mycobacterium tuberculosis (strain CDC 1551 / Oshkosh).